Reading from the N-terminus, the 387-residue chain is 8-amino-7-oxononanoate synthase (387 aa).

Residue R19 coordinates substrate. Residue G106 to Y107 participates in pyridoxal 5'-phosphate binding. Residue H131 coordinates substrate. S177, H205, and T236 together coordinate pyridoxal 5'-phosphate. K239 bears the N6-(pyridoxal phosphate)lysine mark. T353 provides a ligand contact to substrate.

This sequence belongs to the class-II pyridoxal-phosphate-dependent aminotransferase family. BioF subfamily. In terms of assembly, homodimer. Pyridoxal 5'-phosphate is required as a cofactor.

It carries out the reaction 6-carboxyhexanoyl-[ACP] + L-alanine + H(+) = (8S)-8-amino-7-oxononanoate + holo-[ACP] + CO2. Its pathway is cofactor biosynthesis; biotin biosynthesis. Its function is as follows. Catalyzes the decarboxylative condensation of pimeloyl-[acyl-carrier protein] and L-alanine to produce 8-amino-7-oxononanoate (AON), [acyl-carrier protein], and carbon dioxide. This is 8-amino-7-oxononanoate synthase from Nitrosomonas europaea (strain ATCC 19718 / CIP 103999 / KCTC 2705 / NBRC 14298).